Reading from the N-terminus, the 502-residue chain is uncharacterized protein (502 aa).

The helical transmembrane segment at 1–21 (MKIFLVFLSVFFFNGCFGLVY) threads the bilayer. PLD phosphodiesterase domains follow at residues 162–189 (IKKRMHNKLFIVDNFAVIIGGRNIGDNY) and 396–423 (TKHSLHGKTIVFDDNLTLLGSFNIDPRS).

Belongs to the phospholipase D family. Cardiolipin synthase subfamily.

It localises to the cell membrane. This is an uncharacterized protein from Helicobacter pylori (strain ATCC 700392 / 26695) (Campylobacter pylori).